A 232-amino-acid polypeptide reads, in one-letter code: 5'-methylthioadenosine/S-adenosylhomocysteine nucleosidase (232 aa).

The Proton acceptor role is filled by Glu14. Residues Gly80, Val154, and 175-176 (ME) contribute to the substrate site. Residue Asp199 is the Proton donor of the active site.

It belongs to the PNP/UDP phosphorylase family. MtnN subfamily.

The catalysed reaction is S-adenosyl-L-homocysteine + H2O = S-(5-deoxy-D-ribos-5-yl)-L-homocysteine + adenine. It carries out the reaction S-methyl-5'-thioadenosine + H2O = 5-(methylsulfanyl)-D-ribose + adenine. It catalyses the reaction 5'-deoxyadenosine + H2O = 5-deoxy-D-ribose + adenine. It functions in the pathway amino-acid biosynthesis; L-methionine biosynthesis via salvage pathway; S-methyl-5-thio-alpha-D-ribose 1-phosphate from S-methyl-5'-thioadenosine (hydrolase route): step 1/2. In terms of biological role, catalyzes the irreversible cleavage of the glycosidic bond in both 5'-methylthioadenosine (MTA) and S-adenosylhomocysteine (SAH/AdoHcy) to adenine and the corresponding thioribose, 5'-methylthioribose and S-ribosylhomocysteine, respectively. Also cleaves 5'-deoxyadenosine, a toxic by-product of radical S-adenosylmethionine (SAM) enzymes, into 5-deoxyribose and adenine. The sequence is that of 5'-methylthioadenosine/S-adenosylhomocysteine nucleosidase from Haemophilus ducreyi (strain 35000HP / ATCC 700724).